Consider the following 165-residue polypeptide: Lipoprotein signal peptidase (165 aa).

A run of 3 helical transmembrane segments spans residues 9 to 29, 69 to 89, and 100 to 120; these read LLTI…VLLY, KYFL…FLFL, and FSLI…FFYN. Residues Asp-124 and Asp-142 contribute to the active site. The chain crosses the membrane as a helical span at residues 133–153; that stretch reads WSFPTFNFADIFISLGTLIFV.

This sequence belongs to the peptidase A8 family.

The protein localises to the cell inner membrane. It catalyses the reaction Release of signal peptides from bacterial membrane prolipoproteins. Hydrolyzes -Xaa-Yaa-Zaa-|-(S,diacylglyceryl)Cys-, in which Xaa is hydrophobic (preferably Leu), and Yaa (Ala or Ser) and Zaa (Gly or Ala) have small, neutral side chains.. It functions in the pathway protein modification; lipoprotein biosynthesis (signal peptide cleavage). Its function is as follows. This protein specifically catalyzes the removal of signal peptides from prolipoproteins. This chain is Lipoprotein signal peptidase, found in Chlamydia felis (strain Fe/C-56) (Chlamydophila felis).